Here is a 163-residue protein sequence, read N- to C-terminus: Small ribosomal subunit protein uS9 (163 aa).

The span at 1–11 (MAENTNDSQVV) shows a compositional bias: polar residues. Positions 1-40 (MAENTNDSQVVETEEELTNYTTETNAGAGTGTSAIEPGYG) are disordered. Residues 18–27 (TNYTTETNAG) are compositionally biased toward low complexity.

Belongs to the universal ribosomal protein uS9 family.

This Bifidobacterium longum (strain DJO10A) protein is Small ribosomal subunit protein uS9.